The primary structure comprises 333 residues: Leucine carboxyl methyltransferase 1 (333 aa).

S-adenosyl-L-methionine contacts are provided by residues lysine 42, arginine 82, glycine 107, aspartate 131, 181-182 (DL), and glutamate 208.

The protein belongs to the methyltransferase superfamily. LCMT family.

The enzyme catalyses [phosphatase 2A protein]-C-terminal L-leucine + S-adenosyl-L-methionine = [phosphatase 2A protein]-C-terminal L-leucine methyl ester + S-adenosyl-L-homocysteine. In terms of biological role, methylates the carboxyl group of the C-terminal leucine residue of protein phosphatase 2A catalytic subunits to form alpha-leucine ester residues. This Caenorhabditis elegans protein is Leucine carboxyl methyltransferase 1.